A 425-amino-acid polypeptide reads, in one-letter code: Protein CLP1 homolog (425 aa).

ATP contacts are provided by residues glutamate 18, lysine 59, and 121–126 (DVGKST).

The protein belongs to the Clp1 family. Clp1 subfamily.

The protein resides in the nucleus. Required for endonucleolytic cleavage during polyadenylation-dependent pre-mRNA 3'-end formation. The chain is Protein CLP1 homolog (cbc) from Drosophila persimilis (Fruit fly).